The sequence spans 525 residues: Keratin, type I cytoskeletal 24 (525 aa).

The tract at residues 1–30 (MSCSSRASSSRAGGSSSARVSAGGSSFSSG) is disordered. A head region spans residues 1–139 (MSCSSRASSS…VGDGGLFSGG (139 aa)). The segment at 140–175 (EKQTMQNLNDRLANYLDKVRALEEANTDLENKIKEW) is coil 1A. Positions 140–456 (EKQTMQNLND…RLLDGEGGGS (317 aa)) constitute an IF rod domain. Residues 176–198 (YDKYGPGSGDGGSGRDYSKYYSI) are linker 1. The coil 1B stretch occupies residues 199-290 (IEDLRNQIIA…KNHEEEMKNM (92 aa)). The interval 291–313 (QGSSGGEVTVEMNAAPGTDLTKL) is linker 12. Positions 314–452 (LNDMRAQYEE…ETYRRLLDGE (139 aa)) are coil 2. The tract at residues 453–525 (GGGSSFAEFG…VSSISEVKVK (73 aa)) is tail. The segment at 459–497 (AEFGGRNSGSVNMGSRDLVSGDSRSGSCSGQGRDSSKTR) is disordered. Polar residues predominate over residues 480-491 (DSRSGSCSGQGR).

Belongs to the intermediate filament family. Heterotetramer of two type I and two type II keratins. As to expression, highly expressed in keratinocytes, placenta, colon and spleen. Expressed at lower level in thymus and testis.

This chain is Keratin, type I cytoskeletal 24 (KRT24), found in Homo sapiens (Human).